Here is a 224-residue protein sequence, read N- to C-terminus: UPF0758 protein PM1152 (224 aa).

In terms of domain architecture, MPN spans 102–224 (AFKNSENVRF…YYSFAENRLL (123 aa)). Zn(2+) is bound by residues His-173, His-175, and Asp-186. The short motif at 173–186 (HNHPSGNPEPSASD) is the JAMM motif element.

It belongs to the UPF0758 family.

The protein is UPF0758 protein PM1152 of Pasteurella multocida (strain Pm70).